The following is a 167-amino-acid chain: Acetolactate synthase small subunit (167 aa).

Residues 7 to 81 form the ACT domain; that stretch reads TLSVLVEAKP…NVIKIVELED (75 aa).

This sequence belongs to the acetolactate synthase small subunit family. Dimer of large and small chains.

It carries out the reaction 2 pyruvate + H(+) = (2S)-2-acetolactate + CO2. The protein operates within amino-acid biosynthesis; L-isoleucine biosynthesis; L-isoleucine from 2-oxobutanoate: step 1/4. Its pathway is amino-acid biosynthesis; L-valine biosynthesis; L-valine from pyruvate: step 1/4. This chain is Acetolactate synthase small subunit (ilvH), found in Mycobacterium avium.